We begin with the raw amino-acid sequence, 231 residues long: DNA repair protein RecO (231 aa).

It belongs to the RecO family.

Its function is as follows. Involved in DNA repair and RecF pathway recombination. In Coxiella burnetii (strain CbuK_Q154) (Coxiella burnetii (strain Q154)), this protein is DNA repair protein RecO.